The primary structure comprises 507 residues: Hexokinase-5 (507 aa).

A helical transmembrane segment spans residues 4–24 (AAAVGTAVVVAAAVGVAVVLA). The 455-residue stretch at 44 to 498 (RKVAAVIEDV…SGIGAALLAA (455 aa)) folds into the Hexokinase domain. Positions 99–237 (TGNEQGLFYA…GLDMKIAALV (139 aa)) are hexokinase small subdomain. Positions 113, 114, and 115 each coordinate ADP. The D-glucose site is built by threonine 203, lysine 204, asparagine 238, and aspartate 239. The interval 238 to 487 (NDTVGTLAGG…SSVVTKLAND (250 aa)) is hexokinase large subdomain. Threonine 262 provides a ligand contact to ADP. 3 residues coordinate D-glucose: asparagine 265, glutamate 293, and glutamate 324. Residue glycine 452 coordinates ADP.

Belongs to the hexokinase family. In terms of tissue distribution, expressed in roots, leaves, flowers, immature seeds, endosperm and seed coat.

It is found in the plastid. The protein resides in the chloroplast outer membrane. The enzyme catalyses a D-hexose + ATP = a D-hexose 6-phosphate + ADP + H(+). It carries out the reaction D-fructose + ATP = D-fructose 6-phosphate + ADP + H(+). It catalyses the reaction D-glucose + ATP = D-glucose 6-phosphate + ADP + H(+). Its pathway is carbohydrate metabolism; hexose metabolism. It functions in the pathway carbohydrate degradation; glycolysis; D-glyceraldehyde 3-phosphate and glycerone phosphate from D-glucose: step 1/4. Its function is as follows. Fructose and glucose phosphorylating enzyme. Functions as a glucose sensor for plant growth and photosynthesis. Is essential for pollen development, germination, and tube growth. Its activity is necessary for the starch utilization pathway during pollen germination and tube growth, as well as for starch biosynthesis during pollen maturation. This chain is Hexokinase-5 (HXK5), found in Oryza sativa subsp. japonica (Rice).